A 156-amino-acid polypeptide reads, in one-letter code: Snaclec A5 (156 aa).

The signal sequence occupies residues 1-23 (MGRSISVSFGLLVVFLSLSGTGA). 3 cysteine pairs are disulfide-bonded: cysteine 27–cysteine 38, cysteine 55–cysteine 154, and cysteine 129–cysteine 146. In terms of domain architecture, C-type lectin spans 34–155 (HEGHCYKVFN…CGKPYRFTCE (122 aa)).

This sequence belongs to the snaclec family. Heterodimer; disulfide-linked. In terms of tissue distribution, expressed by the venom gland.

The protein resides in the secreted. Its function is as follows. Interferes with one step of hemostasis (modulation of platelet aggregation, or coagulation cascade, for example). In Macrovipera lebetinus (Levantine viper), this protein is Snaclec A5.